The chain runs to 2430 residues: MAAQPGPGSAASPGCAGAMERVLPMLLVRIPAEETAQLGPRAQLHRELEALGSLTAAGSLQVLSLAPGSRGGSSCCLPGPFRQFLWEESQNSTSRDRPKLLVAREDYELLVYEFDLRDGRCDAALLHGCCGRTLQKLTEDQGVSISFKSLRILSFHNNTSLLLINRCLILRVVFPGKEPGVPVLDCLSLPLPAQAADMIIDAQLCERFLFVLSTVGLIYIFNTMDGTQVAQVDLALLREDSEQLEPASVSSFTSLRVSQDLDVLVLVSSASTAVALNLHLYFRQHPGHLLCEGTLEDLPIEGPPGIDEDDLVNSAHNMKLSKVSFQVDRSWRAQLLSLNESVRGSEPEVSCCAPWFQSALRLESLESADHTPTVPTHVFIPGDVPRGRCAFPQKEHVKSSDPGRPWKTMHLSEHEQPTELTCLSVTGFTALFTWAVGATSCTIGLWDLETQSMQCFSLSQKCTPVDIGGDQQLCLALTDDGLSLILFGLTQEEFLNRLMIHGSASTVDSLCHLNGWGRCSIPIHALEAGIENRQLDTVDFFLKSKENLLTPSSQSPAPDQQHPFSSHLYLRQVEEMSPALDLLCSAIRESDSETQSKHFAEQLLHLTLSFLNKQIRELCVHTEELDEHFQKGVAILTSYINELRTFMIKFPWKPGDAIDESDVNEGVVTVKEDRVWEELSFEEVIADAILNNRIPEAQTFFRISGHSAQRLEELVRIGLDLAFDSLKKNNVEEASRLLRNMGFSVEDELLKICFYTTDKNIRDFLVEILKEKECFSEKERRTVDFVHQLEALYSGHFQENAQTQAFPRYWIKEQDCFKHKSVLDTFLKYDKKDEFHKQDHRIALNWAHRWDLQTQECILLRRLSPEEYKARSPEALWRHLTARHDCSSISLWMEEFQTQETESPQQSKWPPLSADIIEQGTCCHSHMRNEILDKLARSGIFLASELEDFERLLLRLSRIGGVMQDSLPVQSYKSRAGCDFHSRFILYCLEHGLQHLLYTYLDYYKLSPGNCPFLEKKELHEAHPWLEFLVQCRQVSSNLTDPKLIFQASLANAQILIPTNQASVSSMLLEGHTLLALATTMYAPGGVSQVIQNEDSENCLKKVDPQLLKVALTPYPKLKAALFPQYTAPSILPSDITLYHLIQSLPPFDPSRLFVWQSANTLAIGDTGSQLPHFSSPDLVSKYAVLERLNYAYYLHHGRPSFAFGTFLVQELIKSKTPKQLIQQVGKEAYTLGLSSFTNPSVGAACVCFLELLGLSSLKLRVDLKMANVILGSKRRDEDARSSFIRESLAEKLSKLADGDRAATEELLVLLEEGVWDSIEQQGFSRLSSESSSQWALVLQFCMLHDRKLSVSYLRECAKANDWLQFLVHSQLHNYHPAEVESLLQYFSPVLQSHLKLASEKLSSGSISRDDSCLQELQKNKGETSNFFEILHRCSDESTSWSWLLAEAVRHRAPILSVLASCVQGASVVSCLCVWIVTSVEDKVAAEAMGHIQISVEDHHWSLKDLSIIWRTVLTRRKSHTLIRGFQLFIKDSPLLLIMEMYELCMFFKNYEKAKVKLLEFQKSLETLDTVAARVLPIIPASWMKDQVCFLLKLMPQQCETQYELGKLLQLFVGTEQLFSDGPDVQKLCLLSQVLKDTPIAISPAVISSYSTENFQRECRSILEKLKADGQFAVARRVAELAALPVDSLLIEQLTQEMQTLTHTPQWSLKQERLGFWKKCHEIFKKNSISKRAASSFFSSQAPEVSEHPAEQGSLEERHLLLTLAGHWLAQEEPVPVEELEGLEKQIWICRVAQHTCGGAEEEAKPSLSQHKLAAAELSFDSLASELSFSKLAALNTSKYLGLNDLPSKTTCENRLKHKEQESLNTLIGQLLDGGCVHEASRVCQYFRFYSQDLVLVLHCRALASAEATMEDLHSEIRALLSSAAQPEDLESPSVPLRKAHSSSSLDSQSFVMVPPTDEVAQNLHTLISKCLHGKNYCRQVLCLYELAKDLGCSYGDVAARDSEAMLRAILASQRPDRCRQAQVFINTQGLEADTVAELVAEEVTRELLTPSEGTGEKQPFNPAEESQTFLQLTALCQDRTLVGMKLLDKIPSVPHGELSCTTELLILAHHCFTFTCHMEGITRVLQAARMLTDNHLAPNEEYGLVVRLLTGIGRYNEMTYIFDLLHQKHYFEVLMRKKLDPTGTLKTALLDYIKRCRPGDSEKHNMIALCFSMCREIGENHEAAACIQLKLIESQPWEESLKDGAQLKQLLLKALTLMLDAAESYAKDSCVRQALHCNRLTKLITLQIHFLNSGQNTMLINLGHQKLMDCIMTLPRFYQASIVAEAYDFVPDWAEVLYQQVILKGDFSYLEEFKQQKLLRPNIFEDISKKYKQHQPTDRVTENLKKLLSYCEDIYLYYKLAYEHKFFEIVNMLLKDPQTGCCLKDMLAG.

Phosphoserine occurs at positions 1942 and 1943.

Interacts with AP5Z1, AP5B1, AP5S1 and ZFYVE26. As to expression, ubiquitously expressed at low level. Expressed in embryonic and adult cortical projection neurons.

The protein localises to the cytoplasm. The protein resides in the cytosol. It localises to the nucleus. Its subcellular location is the cell projection. It is found in the axon. The protein localises to the dendrite. The protein resides in the synapse. May play a role in neurite plasticity by maintaining cytoskeleton stability and regulating synaptic vesicle transport. The chain is Spatacsin (Spg11) from Mus musculus (Mouse).